A 252-amino-acid polypeptide reads, in one-letter code: tRNA (guanine-N(1)-)-methyltransferase (252 aa).

S-adenosyl-L-methionine is bound by residues Gly-113 and 133-138 (LGDYVL).

This sequence belongs to the RNA methyltransferase TrmD family. In terms of assembly, homodimer.

Its subcellular location is the cytoplasm. It catalyses the reaction guanosine(37) in tRNA + S-adenosyl-L-methionine = N(1)-methylguanosine(37) in tRNA + S-adenosyl-L-homocysteine + H(+). In terms of biological role, specifically methylates guanosine-37 in various tRNAs. This is tRNA (guanine-N(1)-)-methyltransferase from Stenotrophomonas maltophilia (strain K279a).